The sequence spans 947 residues: Bifunctional glutamine synthetase adenylyltransferase/adenylyl-removing enzyme (947 aa).

The tract at residues 1 to 443 (MQLPSSLVSV…VFETLIGDDE (443 aa)) is adenylyl removase. The interval 451-947 (ARHFHELWDM…VKQAWNQWFA (497 aa)) is adenylyl transferase.

The protein belongs to the GlnE family. Mg(2+) is required as a cofactor.

It carries out the reaction [glutamine synthetase]-O(4)-(5'-adenylyl)-L-tyrosine + phosphate = [glutamine synthetase]-L-tyrosine + ADP. The catalysed reaction is [glutamine synthetase]-L-tyrosine + ATP = [glutamine synthetase]-O(4)-(5'-adenylyl)-L-tyrosine + diphosphate. Involved in the regulation of glutamine synthetase GlnA, a key enzyme in the process to assimilate ammonia. When cellular nitrogen levels are high, the C-terminal adenylyl transferase (AT) inactivates GlnA by covalent transfer of an adenylyl group from ATP to specific tyrosine residue of GlnA, thus reducing its activity. Conversely, when nitrogen levels are low, the N-terminal adenylyl removase (AR) activates GlnA by removing the adenylyl group by phosphorolysis, increasing its activity. The regulatory region of GlnE binds the signal transduction protein PII (GlnB) which indicates the nitrogen status of the cell. This is Bifunctional glutamine synthetase adenylyltransferase/adenylyl-removing enzyme from Vibrio parahaemolyticus serotype O3:K6 (strain RIMD 2210633).